The primary structure comprises 266 residues: METLKSNKARLEYLINDMHRERNDNDVLVMPSSFEDLWELYRGLANVRPALPVSDEYLAVQDAMLSDLNRQHVTDLKDLKPIKGDNIFVWQGDITTLKIDAIVNAANSRFLGCMQANHDCIDNIIHTKAGVQVRLDCAEIIRQQGRNEGVGKAKITRGYNLSAKYIIHTVGPQIRRLPVSKMNQDLLAKCYLSCLKLADQHSLNHVAFCCISTGVFAFPQDEAAEIAVRTVESYLKETNSTLKVVFNVFTDKDLQLYKEAFNRDAE.

Positions 74-265 (TDLKDLKPIK…LYKEAFNRDA (192 aa)) constitute a Macro domain. 3 residues coordinate ADP-D-ribose: aspartate 93, isoleucine 94, and asparagine 107. Zn(2+)-binding residues include cysteine 113, histidine 118, and cysteine 120. The ADP-D-ribose site is built by cysteine 120, isoleucine 121, aspartate 122, serine 212, threonine 213, glycine 214, and phenylalanine 216.

The protein belongs to the MacroD-type family. Zn-Macro subfamily. The cofactor is Zn(2+).

It catalyses the reaction 4-O-(ADP-D-ribosyl)-L-aspartyl-[protein] + H2O = L-aspartyl-[protein] + ADP-D-ribose + H(+). Its function is as follows. ADP-ribosylhydrolase that specifically reverses the SirTM-mediated mono-ADP-ribosylation at an asparatate residue of GcvH-L, by releasing ADP-ribose from the target protein. May play a role in the regulation of the response to host-induced oxidative stress. The protein is Protein-ADP-ribose hydrolase of Staphylococcus aureus (strain COL).